The primary structure comprises 927 residues: Perchlorate reductase subunit alpha (927 aa).

A signal peptide (tat-type signal) is located at residues Met1–Ala31. The region spanning Asp53 to His116 is the 4Fe-4S Mo/W bis-MGD-type domain. The [4Fe-4S] cluster site is built by His60, Cys64, Cys68, and Cys102. Position 198 (Asp198) interacts with Mo-bis(molybdopterin guanine dinucleotide).

This sequence belongs to the prokaryotic molybdopterin-containing oxidoreductase family. In terms of assembly, heterotrimer of alpha, beta and gamma subunits. [4Fe-4S] cluster serves as cofactor. Mo-bis(molybdopterin guanine dinucleotide) is required as a cofactor. Predicted to be exported by the Tat system. The position of the signal peptide cleavage has not been experimentally proven.

It is found in the periplasm. Functionally, component of the perchlorate reductase that catalyzes the reduction of perchlorate to chlorite and allows anaerobic growth on perchlorate as the sole electron acceptor. Is probably also able to reduce chlorate to chlorite. The alpha subunit is likely the catalytic subunit. In Dechloromonas aromatica (strain RCB), this protein is Perchlorate reductase subunit alpha (pcrA).